The sequence spans 394 residues: Small ribosomal subunit protein mS79 (rPPR3b) (394 aa).

The transit peptide at 1 to 24 (MSSLSRFLLRGNFSFSTHTNRRFF) directs the protein to the mitochondrion. PPR repeat units follow at residues 105–139 (KEGF…NCKR), 140–170 (TALS…LPGK), 176–210 (DVAS…GLKP), 211–245 (DHIT…NVKR), 246–280 (DIRS…ELKP), 281–315 (DVFT…GCRP), 316–350 (LKFV…RLLV), and 351–385 (DEAV…DYLQ).

The protein belongs to the PPR family. P subfamily. As to quaternary structure, component of the mitochondrial ribosome small subunit.

The protein resides in the mitochondrion. The polypeptide is Small ribosomal subunit protein mS79 (rPPR3b) (Arabidopsis thaliana (Mouse-ear cress)).